A 356-amino-acid chain; its full sequence is Putative aminopeptidase FrvX (356 aa).

A divalent metal cation is bound by residues His61 and Asp175. Glu205 acts as the Proton acceptor in catalysis. Residues Glu206, Asp228, and His316 each contribute to the a divalent metal cation site.

It belongs to the peptidase M42 family. A divalent metal cation serves as cofactor.

This chain is Putative aminopeptidase FrvX (frvX), found in Escherichia coli (strain K12).